Here is a 124-residue protein sequence, read N- to C-terminus: Putative B3 domain-containing protein At1g51970 (124 aa).

Residues 18-124 (VLKKNLTESD…SRRFLFHHIN (107 aa)) constitute a DNA-binding region (TF-B3).

It is found in the nucleus. The protein is Putative B3 domain-containing protein At1g51970 of Arabidopsis thaliana (Mouse-ear cress).